Reading from the N-terminus, the 215-residue chain is Large ribosomal subunit protein uL4 (215 aa).

Positions 46–76 (TAKSKNRAEVSGGGRKPWAQKGGGRARAGSI) are disordered. Residues 56-71 (SGGGRKPWAQKGGGRA) are compositionally biased toward gly residues.

The protein belongs to the universal ribosomal protein uL4 family. In terms of assembly, part of the 50S ribosomal subunit.

In terms of biological role, one of the primary rRNA binding proteins, this protein initially binds near the 5'-end of the 23S rRNA. It is important during the early stages of 50S assembly. It makes multiple contacts with different domains of the 23S rRNA in the assembled 50S subunit and ribosome. Its function is as follows. Forms part of the polypeptide exit tunnel. The protein is Large ribosomal subunit protein uL4 of Helicobacter pylori (strain HPAG1).